Here is a 403-residue protein sequence, read N- to C-terminus: Aminomethyltransferase, mitochondrial (403 aa).

The N-terminal 28 residues, 1–28, are a transit peptide targeting the mitochondrion; it reads MHRIVSVVAPLGFRLQAQPLVQSRPLSS. Substrate-binding residues include glutamate 232 and arginine 261. Lysine 368 is modified (N6-succinyllysine). Substrate is bound at residue tyrosine 399.

The protein belongs to the GcvT family. The glycine cleavage system is composed of four proteins: P, T, L and H.

It localises to the mitochondrion. It catalyses the reaction N(6)-[(R)-S(8)-aminomethyldihydrolipoyl]-L-lysyl-[protein] + (6S)-5,6,7,8-tetrahydrofolate = N(6)-[(R)-dihydrolipoyl]-L-lysyl-[protein] + (6R)-5,10-methylene-5,6,7,8-tetrahydrofolate + NH4(+). In terms of biological role, the glycine cleavage system catalyzes the degradation of glycine. The sequence is that of Aminomethyltransferase, mitochondrial from Mus musculus (Mouse).